Consider the following 185-residue polypeptide: Probable E3 ubiquitin-protein ligase ATL44 (185 aa).

Residues 29–49 (VVILSALLCALICVAGLAAVV) traverse the membrane as a helical segment. The RING-type; atypical zinc finger occupies 102–144 (CAICLTDFADGEEIRVLPLCGHSFHVECIDKWLVSRSSCPSCR). The tract at residues 163-185 (MKDQAHRHQHHQHSSTTIPTFLP) is disordered. Over residues 176–185 (SSTTIPTFLP) the composition is skewed to polar residues.

Belongs to the RING-type zinc finger family. ATL subfamily. In terms of assembly, interacts with BIK1. In terms of processing, auto-monoubiquitination. In terms of tissue distribution, expressed in stems, flowers and green siliques.

It is found in the membrane. It catalyses the reaction S-ubiquitinyl-[E2 ubiquitin-conjugating enzyme]-L-cysteine + [acceptor protein]-L-lysine = [E2 ubiquitin-conjugating enzyme]-L-cysteine + N(6)-ubiquitinyl-[acceptor protein]-L-lysine.. It participates in protein modification; protein ubiquitination. In terms of biological role, E3 ubiquitin-protein ligase that possess E3 ubiquitin ligase activity in vitro and mediates protein monoubiquitination. Triggers the monoubiquitination of phosphorylated BIK1 in response to pathogen-associated molecular pattern (PAMP) detection. This Arabidopsis thaliana (Mouse-ear cress) protein is Probable E3 ubiquitin-protein ligase ATL44.